Consider the following 107-residue polypeptide: Ribonuclease P protein subunit rpr2 (107 aa).

The Zn(2+) site is built by cysteine 59, cysteine 62, cysteine 93, and cysteine 96.

Belongs to the eukaryotic/archaeal RNase P protein component 4 family. Requires Zn(2+) as cofactor.

Its subcellular location is the cytoplasm. It localises to the nucleus. The catalysed reaction is Endonucleolytic cleavage of RNA, removing 5'-extranucleotides from tRNA precursor.. Its function is as follows. Component of ribonuclease P, a protein complex that generates mature tRNA molecules by cleaving their 5'-ends. This Schizosaccharomyces pombe (strain 972 / ATCC 24843) (Fission yeast) protein is Ribonuclease P protein subunit rpr2 (rpr2).